A 267-amino-acid polypeptide reads, in one-letter code: Tryptophan synthase alpha chain (267 aa).

Residues E49 and D60 each act as proton acceptor in the active site.

It belongs to the TrpA family. In terms of assembly, tetramer of two alpha and two beta chains.

The catalysed reaction is (1S,2R)-1-C-(indol-3-yl)glycerol 3-phosphate + L-serine = D-glyceraldehyde 3-phosphate + L-tryptophan + H2O. Its pathway is amino-acid biosynthesis; L-tryptophan biosynthesis; L-tryptophan from chorismate: step 5/5. Its function is as follows. The alpha subunit is responsible for the aldol cleavage of indoleglycerol phosphate to indole and glyceraldehyde 3-phosphate. This Geobacter sp. (strain M21) protein is Tryptophan synthase alpha chain.